Consider the following 340-residue polypeptide: tRNA N6-adenosine threonylcarbamoyltransferase (340 aa).

Fe cation is bound by residues His111 and His115. Substrate contacts are provided by residues 134–138 (LVSGG), Asp167, Gly180, and Asn272. Asp300 contributes to the Fe cation binding site.

The protein belongs to the KAE1 / TsaD family. Fe(2+) serves as cofactor.

The protein localises to the cytoplasm. The catalysed reaction is L-threonylcarbamoyladenylate + adenosine(37) in tRNA = N(6)-L-threonylcarbamoyladenosine(37) in tRNA + AMP + H(+). Functionally, required for the formation of a threonylcarbamoyl group on adenosine at position 37 (t(6)A37) in tRNAs that read codons beginning with adenine. Is involved in the transfer of the threonylcarbamoyl moiety of threonylcarbamoyl-AMP (TC-AMP) to the N6 group of A37, together with TsaE and TsaB. TsaD likely plays a direct catalytic role in this reaction. The polypeptide is tRNA N6-adenosine threonylcarbamoyltransferase (Proteus mirabilis (strain HI4320)).